Consider the following 252-residue polypeptide: Hydroxyacylglutathione hydrolase (252 aa).

Zn(2+) is bound by residues His54, His56, Asp58, His59, His111, Asp128, and His166.

The protein belongs to the metallo-beta-lactamase superfamily. Glyoxalase II family. Monomer. Zn(2+) serves as cofactor.

It carries out the reaction an S-(2-hydroxyacyl)glutathione + H2O = a 2-hydroxy carboxylate + glutathione + H(+). It functions in the pathway secondary metabolite metabolism; methylglyoxal degradation; (R)-lactate from methylglyoxal: step 2/2. Functionally, thiolesterase that catalyzes the hydrolysis of S-D-lactoyl-glutathione to form glutathione and D-lactic acid. The sequence is that of Hydroxyacylglutathione hydrolase from Vibrio cholerae serotype O1 (strain ATCC 39541 / Classical Ogawa 395 / O395).